A 449-amino-acid chain; its full sequence is Glucose-6-phosphate isomerase (449 aa).

The active-site Proton donor is the Glu-291. Residues His-312 and Lys-426 contribute to the active site.

This sequence belongs to the GPI family.

It is found in the cytoplasm. The catalysed reaction is alpha-D-glucose 6-phosphate = beta-D-fructose 6-phosphate. It participates in carbohydrate biosynthesis; gluconeogenesis. It functions in the pathway carbohydrate degradation; glycolysis; D-glyceraldehyde 3-phosphate and glycerone phosphate from D-glucose: step 2/4. Functionally, catalyzes the reversible isomerization of glucose-6-phosphate to fructose-6-phosphate. This chain is Glucose-6-phosphate isomerase, found in Streptococcus pyogenes serotype M12 (strain MGAS2096).